Reading from the N-terminus, the 456-residue chain is uncharacterized protein (456 aa).

Residues 3 to 61 (LMRKNETREFLIEDIEFPAVGVAFYNDKKVYIKGAVPGQKVLARVSKVRREKIEAKLKE) form the TRAM domain. Cys-74, Cys-80, Cys-83, and Cys-163 together coordinate [4Fe-4S] cluster. S-adenosyl-L-methionine is bound by residues Gln-289, Tyr-318, Glu-339, and Asp-384. Cys-411 serves as the catalytic Nucleophile.

It belongs to the class I-like SAM-binding methyltransferase superfamily. RNA M5U methyltransferase family.

This is an uncharacterized protein from Clostridium acetobutylicum (strain ATCC 824 / DSM 792 / JCM 1419 / IAM 19013 / LMG 5710 / NBRC 13948 / NRRL B-527 / VKM B-1787 / 2291 / W).